Here is a 123-residue protein sequence, read N- to C-terminus: Small ribosomal subunit protein uS12c (123 aa).

It belongs to the universal ribosomal protein uS12 family. Part of the 30S ribosomal subunit.

It is found in the plastid. It localises to the chloroplast. Functionally, with S4 and S5 plays an important role in translational accuracy. Located at the interface of the 30S and 50S subunits. This chain is Small ribosomal subunit protein uS12c (rps12), found in Pinus thunbergii (Japanese black pine).